The primary structure comprises 114 residues: Large ribosomal subunit protein bL19 (114 aa).

It belongs to the bacterial ribosomal protein bL19 family.

This protein is located at the 30S-50S ribosomal subunit interface and may play a role in the structure and function of the aminoacyl-tRNA binding site. The sequence is that of Large ribosomal subunit protein bL19 from Acetivibrio thermocellus (strain ATCC 27405 / DSM 1237 / JCM 9322 / NBRC 103400 / NCIMB 10682 / NRRL B-4536 / VPI 7372) (Clostridium thermocellum).